We begin with the raw amino-acid sequence, 522 residues long: Secreted RxLR effector protein 105 (522 aa).

The first 21 residues, 1–21, serve as a signal peptide directing secretion; that stretch reads MRGPCSVITALLVVASSQIAA. Positions 48–63 match the RxLR-dEER motif; sequence RYLRGSQHVLDSNEER.

This sequence belongs to the RxLR effector family.

Its subcellular location is the secreted. It localises to the host nucleus. It is found in the host cytoplasm. Its function is as follows. Secreted effector that dos not suppress the host cell death induced by cell death-inducing proteins. This is Secreted RxLR effector protein 105 from Plasmopara viticola (Downy mildew of grapevine).